The following is a 702-amino-acid chain: Ribosomal RNA large subunit methyltransferase K/L (702 aa).

The region spanning 43-154 (LVYQSLMWSR…KETASIALDL (112 aa)) is the THUMP domain.

It belongs to the methyltransferase superfamily. RlmKL family.

It is found in the cytoplasm. It catalyses the reaction guanosine(2445) in 23S rRNA + S-adenosyl-L-methionine = N(2)-methylguanosine(2445) in 23S rRNA + S-adenosyl-L-homocysteine + H(+). The enzyme catalyses guanosine(2069) in 23S rRNA + S-adenosyl-L-methionine = N(2)-methylguanosine(2069) in 23S rRNA + S-adenosyl-L-homocysteine + H(+). In terms of biological role, specifically methylates the guanine in position 2445 (m2G2445) and the guanine in position 2069 (m7G2069) of 23S rRNA. This Shigella flexneri serotype 5b (strain 8401) protein is Ribosomal RNA large subunit methyltransferase K/L.